Here is a 431-residue protein sequence, read N- to C-terminus: MHRFRKNTCLISDYFHSTGGNYNLSQPCVNIGMVGHVDHGKTTLVRALSGVWTDTHSEEVKRGISIRLGYADSPFMKCPKCPEPQCYTVEKTCPNCGEKTEEHRTVSFVDAPGHETLMATMLSGAAIMDGAVLVIAANEDCPQPQTKEHLMALDIIGIKNIVIVQNKIDLVSREKIIENYHQIKEFVKGTVAENAPVIPISAQQNINIDILIDALETQIPTPSHKVDKPASMLIARSFDINKPGASIEEIRGGVIGGTLTEGVLHPGDELEIRPGIKVTTEGSTRWIPILTTVSSIYAGATKVDEATPGGLLAVGTYLDPTLTKGDSLTGQMAGVPGTLPETRHQFVMELHLLDRVVGVTREEKINEIKTSEPLMLNIGTATTVGVVTSARKNEAQVALKRPISAAIGAMVAISRRVDSRWRLIGVGVIKS.

A tr-type G domain is found at 26–223; that stretch reads QPCVNIGMVG…ALETQIPTPS (198 aa). Residues 35-42 are G1; it reads GHVDHGKT. Mg(2+)-binding residues include aspartate 38, threonine 42, glycine 63, and serine 65. 38–43 provides a ligand contact to GTP; that stretch reads DHGKTT. The interval 63-67 is G2; sequence GISIR. The Zn(2+) site is built by cysteine 78, cysteine 81, cysteine 93, and cysteine 96. A G3 region spans residues 110–113; the sequence is DAPG. GTP contacts are provided by residues 166 to 169 and 201 to 203; these read NKID and SAQ. The interval 166 to 169 is G4; it reads NKID. Residues 201–203 are G5; sequence SAQ.

The protein belongs to the TRAFAC class translation factor GTPase superfamily. Classic translation factor GTPase family. EIF2G subfamily. In terms of assembly, heterotrimer composed of an alpha, a beta and a gamma chain. Mg(2+) is required as a cofactor.

It carries out the reaction GTP + H2O = GDP + phosphate + H(+). Its function is as follows. eIF-2 functions in the early steps of protein synthesis by forming a ternary complex with GTP and initiator tRNA. The protein is Translation initiation factor 2 subunit gamma of Methanosarcina mazei (strain ATCC BAA-159 / DSM 3647 / Goe1 / Go1 / JCM 11833 / OCM 88) (Methanosarcina frisia).